A 371-amino-acid polypeptide reads, in one-letter code: tRNA-specific 2-thiouridylase MnmA (371 aa).

Residues Gly-8–Ser-15 and Met-34 each bind ATP. The interval Asn-94–Asp-96 is interaction with target base in tRNA. Residue Cys-99 is the Nucleophile of the active site. An intrachain disulfide couples Cys-99 to Cys-195. Gly-123 provides a ligand contact to ATP. Residues Lys-145–Gln-147 are interaction with tRNA. Catalysis depends on Cys-195, which acts as the Cysteine persulfide intermediate. The tract at residues Arg-309–Tyr-310 is interaction with tRNA.

It belongs to the MnmA/TRMU family.

Its subcellular location is the cytoplasm. It carries out the reaction S-sulfanyl-L-cysteinyl-[protein] + uridine(34) in tRNA + AH2 + ATP = 2-thiouridine(34) in tRNA + L-cysteinyl-[protein] + A + AMP + diphosphate + H(+). Functionally, catalyzes the 2-thiolation of uridine at the wobble position (U34) of tRNA, leading to the formation of s(2)U34. The polypeptide is tRNA-specific 2-thiouridylase MnmA (Methylococcus capsulatus (strain ATCC 33009 / NCIMB 11132 / Bath)).